The chain runs to 175 residues: Glycine-rich RNA-binding protein 1 (175 aa).

The region spanning 3–81 (AKVYVGNLSW…RRIRVNMANS (79 aa)) is the RRM domain. The segment at 114–175 (GQPGGFQQPG…GYGGYNGQSQ (62 aa)) is disordered. Residues 122-131 (PGGFQQQGGY) are compositionally biased toward low complexity. Gly residues predominate over residues 132 to 141 (PQQGGYGGYQ). The span at 142–162 (QPGFQPQQGGYGAPQQGYGAP) shows a compositional bias: low complexity. The segment covering 163–175 (QQGGYGGYNGQSQ) has biased composition (gly residues).

This sequence belongs to the glycine-rich RNA-binding protein family. As to quaternary structure, part of large ribonucleoprotein complexes (mRNPs) containing RNA-binding proteins RRM4 and PAB1, endosome-binding protein UPA1, core scaffold protein UPA2 and associated factor GRP1.

The protein resides in the endosome. Functionally, component of endosomal mRNA transport that regulates polarity of the infectious hyphae by transporting a broad spectrum of cargo mRNAs from the nucleus to cell poles. This chain is Glycine-rich RNA-binding protein 1, found in Mycosarcoma maydis (Corn smut fungus).